We begin with the raw amino-acid sequence, 742 residues long: Synaptic vesicle glycoprotein 2A (742 aa).

The tract at residues 1-57 (MEEGFRDRAAFIRGAKDIAKEVKKHAAKKVVKGLDRVQDEYSRRSYSRFEEEDDDDD) is interaction with SYT1. Residues 1 to 169 (MEEGFRDRAA…GHGRFQWTLY (169 aa)) are Cytoplasmic-facing. A compositionally biased stretch (basic and acidic residues) spans 33–49 (GLDRVQDEYSRRSYSRF). A disordered region spans residues 33 to 144 (GLDRVQDEYS…GRGEAQRRKE (112 aa)). 2 positions are modified to phosphoserine: Ser80 and Ser81. Thr84 is subject to Phosphothreonine. A compositionally biased stretch (gly residues) spans 122-137 (VRGGLSDGEGPPGGRG). The residue at position 127 (Ser127) is a Phosphoserine. A helical transmembrane segment spans residues 170-190 (FVLGLALMADGVEVFVVGFVL). The Extracellular portion of the chain corresponds to 191-205 (PSAEKDMCLSDSNKG). A helical transmembrane segment spans residues 206-226 (MLGLIVYLGMMVGAFLWGGLA). The Cytoplasmic segment spans residues 227-233 (DRLGRRQ). A helical transmembrane segment spans residues 234-254 (CLLISLSVNSVFAFFSSFVQG). The Extracellular portion of the chain corresponds to 255–262 (YGTFLFCR). The helical transmembrane segment at 263-283 (LLSGVGIGGSIPIVFSYFSEF) threads the bilayer. Residues 284–294 (LAQEKRGEHLS) lie on the Cytoplasmic side of the membrane. Residues 295 to 315 (WLCMFWMIGGVYAAAMAWAII) traverse the membrane as a helical segment. The Extracellular segment spans residues 316 to 334 (PHYGWSFQMGSAYQFHSWR). Residues 335–355 (VFVLVCAFPSVFAIGALTTQP) form a helical membrane-spanning segment. Residues 356–447 (ESPRFFLENG…CFGPEYRRIT (92 aa)) are Cytoplasmic-facing. Ser393 carries the post-translational modification Phosphoserine. The chain crosses the membrane as a helical span at residues 448–468 (LMMMGVWFTMSFSYYGLTVWF). Topologically, residues 469 to 598 (PDMIRHLQAV…GTGEGAYMVY (130 aa)) are extracellular. The residue at position 480 (Tyr480) is a Phosphotyrosine. N-linked (GlcNAc...) asparagine glycosylation is found at Asn498, Asn548, and Asn573. The chain crosses the membrane as a helical span at residues 599 to 619 (FVSFLGTLAVLPGNIVSALLM). At 620-626 (DKIGRLR) the chain is on the cytoplasmic side. The helical transmembrane segment at 627–647 (MLAGSSVMSCVSCFFLSFGNS) threads the bilayer. At 648–651 (ESAM) the chain is on the extracellular side. The helical transmembrane segment at 652-672 (IALLCLFGGVSIASWNALDVL) threads the bilayer. Topologically, residues 673–690 (TVGLYPSDKRTTAFGFLN) are cytoplasmic. The chain crosses the membrane as a helical span at residues 691 to 711 (ALCKLAAVLGISIFTSFVGIT). Residue Lys712 is a topological domain, extracellular. The helical transmembrane segment at 713-733 (AAPIPFASAALALGSSLALKL) threads the bilayer. Residues 734–742 (PETRGQVLQ) lie on the Cytoplasmic side of the membrane.

This sequence belongs to the major facilitator superfamily. Interacts with SYT1/synaptotagmin-1 in a calcium-dependent manner. Binds the adapter protein complex AP-2. In terms of processing, phosphorylation by CK1 of the N-terminal cytoplasmic domain regulates interaction with SYT1. Post-translationally, N-glycosylated.

It is found in the presynapse. The protein localises to the cytoplasmic vesicle. Its subcellular location is the secretory vesicle. The protein resides in the synaptic vesicle membrane. Plays a role in the control of regulated secretion in neural and endocrine cells, enhancing selectively low-frequency neurotransmission. Positively regulates vesicle fusion by maintaining the readily releasable pool of secretory vesicles. In Macaca fascicularis (Crab-eating macaque), this protein is Synaptic vesicle glycoprotein 2A (SV2A).